Consider the following 354-residue polypeptide: GDSL esterase/lipase At3g09930 (354 aa).

An N-terminal signal peptide occupies residues 1–24 (MELPKLLISLFLFSFSSFFLGAES). Catalysis depends on serine 46, which acts as the Nucleophile. Residues asparagine 133, asparagine 233, asparagine 237, asparagine 256, and asparagine 300 are each glycosylated (N-linked (GlcNAc...) asparagine). Catalysis depends on residues aspartate 329 and histidine 332.

The protein belongs to the 'GDSL' lipolytic enzyme family.

The protein localises to the secreted. The polypeptide is GDSL esterase/lipase At3g09930 (Arabidopsis thaliana (Mouse-ear cress)).